Consider the following 30-residue polypeptide: Dermaseptin-DI4 (30 aa).

As to expression, expressed by the skin glands.

It localises to the secreted. Functionally, antibacterial activity against Gram-positive bacteria S.aureus and E.faecalis, and Gram-negative bacteria P.aeruginosa and E.coli. This is Dermaseptin-DI4 from Phyllomedusa distincta (Monkey frog).